We begin with the raw amino-acid sequence, 259 residues long: Flap endonuclease Xni (259 aa).

D109 contacts Mg(2+). Positions 165–255 constitute a 5'-3' exonuclease domain; sequence VKPQQLSDYW…FNLQDLRFTA (91 aa). Positions 176, 187, and 190 each coordinate K(+). The tract at residues 189–194 is interaction with DNA; the sequence is GIGPKA.

The protein belongs to the Xni family. Mg(2+) is required as a cofactor. Requires K(+) as cofactor.

Has flap endonuclease activity. During DNA replication, flap endonucleases cleave the 5'-overhanging flap structure that is generated by displacement synthesis when DNA polymerase encounters the 5'-end of a downstream Okazaki fragment. This is Flap endonuclease Xni from Vibrio vulnificus (strain CMCP6).